Here is a 143-residue protein sequence, read N- to C-terminus: Photosystem I reaction center subunit IV A, chloroplastic (143 aa).

The N-terminal 44 residues, 1–44 (MAMTTASTVFVLPANVTSVAGASSSRSSVSFLPMRNAGSRLVVR), are a transit peptide targeting the chloroplast. A disordered region spans residues 43–85 (VRAAEDPAPASSSSKDSPAAAAAPDGATATKPKPPPIGPKRGS). The span at 48–73 (DPAPASSSSKDSPAAAAAPDGATATK) shows a compositional bias: low complexity.

It belongs to the PsaE family. Post-translationally, 2 isoforms may exist. With or without the N-terminal alanine.

Its subcellular location is the plastid. It is found in the chloroplast thylakoid membrane. In terms of biological role, stabilizes the interaction between PsaC and the PSI core, assists the docking of the ferredoxin to PSI and interacts with ferredoxin-NADP oxidoreductase. The sequence is that of Photosystem I reaction center subunit IV A, chloroplastic (PSAE1) from Arabidopsis thaliana (Mouse-ear cress).